The following is a 177-amino-acid chain: Thaumatin-like protein (177 aa).

The N-terminal stretch at 1–26 (MASPATSSAVLVVVLVATLAAGGANA) is a signal peptide.

This sequence belongs to the thaumatin family.

It localises to the secreted. In Oryza sativa subsp. japonica (Rice), this protein is Thaumatin-like protein.